The sequence spans 264 residues: Thiazole synthase (264 aa).

The Schiff-base intermediate with DXP role is filled by lysine 98. 1-deoxy-D-xylulose 5-phosphate is bound by residues glycine 159, 185–186 (AG), and 207–208 (AT).

It belongs to the ThiG family. As to quaternary structure, homotetramer. Forms heterodimers with either ThiH or ThiS.

It is found in the cytoplasm. The enzyme catalyses [ThiS sulfur-carrier protein]-C-terminal-Gly-aminoethanethioate + 2-iminoacetate + 1-deoxy-D-xylulose 5-phosphate = [ThiS sulfur-carrier protein]-C-terminal Gly-Gly + 2-[(2R,5Z)-2-carboxy-4-methylthiazol-5(2H)-ylidene]ethyl phosphate + 2 H2O + H(+). It functions in the pathway cofactor biosynthesis; thiamine diphosphate biosynthesis. Its function is as follows. Catalyzes the rearrangement of 1-deoxy-D-xylulose 5-phosphate (DXP) to produce the thiazole phosphate moiety of thiamine. Sulfur is provided by the thiocarboxylate moiety of the carrier protein ThiS. In vitro, sulfur can be provided by H(2)S. The protein is Thiazole synthase of Mycobacterium ulcerans (strain Agy99).